A 109-amino-acid chain; its full sequence is Large ribosomal subunit protein uL24 (109 aa).

It belongs to the universal ribosomal protein uL24 family. In terms of assembly, part of the 50S ribosomal subunit.

Its function is as follows. One of two assembly initiator proteins, it binds directly to the 5'-end of the 23S rRNA, where it nucleates assembly of the 50S subunit. Functionally, one of the proteins that surrounds the polypeptide exit tunnel on the outside of the subunit. In Rickettsia rickettsii (strain Iowa), this protein is Large ribosomal subunit protein uL24.